A 305-amino-acid polypeptide reads, in one-letter code: U6 small nuclear RNA (adenine-(43)-N(6))-methyltransferase (305 aa).

S-adenosyl-L-methionine contacts are provided by Arg-87, Gly-112, Glu-135, Thr-166, and Asn-188. Residues 197-221 (PNPLGGNTRNPERRPAPNNARTGSQ) are disordered.

This sequence belongs to the methyltransferase superfamily. METTL16/RlmF family.

It carries out the reaction adenosine in U6 snRNA + S-adenosyl-L-methionine = N(6)-methyladenosine in U6 snRNA + S-adenosyl-L-homocysteine + H(+). RNA N6-methyltransferase that mediates N6-methylation of adenine of U6 small nuclear RNA (U6 snRNA). The protein is U6 small nuclear RNA (adenine-(43)-N(6))-methyltransferase of Drosophila melanogaster (Fruit fly).